Consider the following 465-residue polypeptide: Argininosuccinate lyase (465 aa).

This sequence belongs to the lyase 1 family. Argininosuccinate lyase subfamily.

It is found in the cytoplasm. The catalysed reaction is 2-(N(omega)-L-arginino)succinate = fumarate + L-arginine. It participates in amino-acid biosynthesis; L-arginine biosynthesis; L-arginine from L-ornithine and carbamoyl phosphate: step 3/3. The chain is Argininosuccinate lyase from Aromatoleum aromaticum (strain DSM 19018 / LMG 30748 / EbN1) (Azoarcus sp. (strain EbN1)).